The chain runs to 461 residues: MGKEKIHINIVVIGHVDSGKSTTTGHLIYKCGGIDKRTIEKFEKEAQEMGKGSFKYAWVLDKLKAERERGITIDIALWKFETAKYYVTIIDAPGHRDFIKNMITGTSQADCAVLIVAAGIGEFEAGISKNGQTREHALLAFTLGVKQLIVGVNKMDMTDPPYSEARFEEIKKEVSSYIKKIGYNTASVAFVPISGWHGDNMLEPSPKTPWYKGWKVERKDGNADGKTLIEALDAILPPSRPTDKALRLPLQDVYKIGGIGTVPVGRVETGILKPGMLVTFAPAALTTEVKSVEMHHEALTEALPGDNVGFNVKNISVKELRRGYVAGDSKNQPPRGAADFTAQVIVLNHPGQISNGYTPVLDCHTAHIACKFAEIKEKCDRRTGKTTEENPKSIKSGDAAIVMLQPTKPMCVEAFQEFPPLGRFAVRDMRQTVAVGVIKSVTFKDTQGKVTKAAEKAQKKK.

In terms of domain architecture, tr-type G spans 5–242; that stretch reads KIHINIVVIG…DAILPPSRPT (238 aa). Residues 14–21 are G1; it reads GHVDSGKS. GTP is bound at residue 14-21; the sequence is GHVDSGKS. The tract at residues 70-74 is G2; that stretch reads GITID. Positions 91-94 are G3; sequence DAPG. GTP contacts are provided by residues 91 to 95 and 153 to 156; these read DAPGH and NKMD. Positions 153 to 156 are G4; sequence NKMD. A G5 region spans residues 194–196; that stretch reads SGW. 2 positions are modified to 5-glutamyl glycerylphosphorylethanolamine: E301 and E374.

It belongs to the TRAFAC class translation factor GTPase superfamily. Classic translation factor GTPase family. EF-Tu/EF-1A subfamily.

The protein localises to the cytoplasm. In terms of biological role, this protein promotes the GTP-dependent binding of aminoacyl-tRNA to the A-site of ribosomes during protein biosynthesis. The protein is Elongation factor 1-alpha of Apis mellifera (Honeybee).